Here is a 504-residue protein sequence, read N- to C-terminus: Maturase K (504 aa).

It belongs to the intron maturase 2 family. MatK subfamily.

Its subcellular location is the plastid. The protein resides in the chloroplast. Usually encoded in the trnK tRNA gene intron. Probably assists in splicing its own and other chloroplast group II introns. This Guizotia abyssinica (Niger) protein is Maturase K.